The primary structure comprises 911 residues: MATSVDNRHYPRLNPAINGVVRSFKPPPIPSPRHQNKTVSFLTEKVIVKETKNDAVDDSYDSSDDEDESHNRNVSYYKEMIRKSHSDVEPSILDSRDESTADNWIHRNSSMVRLTGKHPFNAEPPLPRLMHHGFITPVPLHYVRNHGTVPKADWSEWTVEITGLVKRPAKFTMEELISEFPSREFPVTLVCAGNRRKEQNMVKQTIGFNWGSAGVSTSLWKGVPLSEILGRCGIYSRRGGGLNVCFEGAEDLPGGGGSKYGTSIKKEMAMDPARDIILAYMQNGELLTPDHGFPVRIIVPGFIGGRMVKWLKRIIVTPQESDSYYHYKDNRVLPSLVDAELANAEAWWYKPEYIINELNINSVITTPGHQEILPINAFTTQKPYTLKGYAYSGGGKKVTRVEVTLDGGDTWSVCDLDHQEKPNKYGKFWCWCFWSLDVEVLDLLSAKDVAVRAWDESFNTQPDKLIWNLMGMMNNCWFRIKTNVCKPHKGEIGIVFEHPTRPGNQSGGWMAKERQLEISSESNPILKKSVSSPFMNTSAKMYSMSEVRKHNSVESAWIIVHGHIYDCTRFLKDHPGGSDSILINAGTDCTEEFEAIHSDKAKKLLEDYRIGELITTGYDSSPNVSVHGGSTAVSLLAPIKELAPSKNIALVNPREKVPVTLIEKTSISHDVRRFRFALPSEDQQLGLPVGKHIFLCANINDKLCLRAYTPTSTVDAVGHIDLVVKVYFKDVHPRFPNGGLMSQHLDSLPIGSVLNIKGPLGHIEYLGKGNFMVTGKPKFAKKLAMLAGGPGITPIYQVIQSILSDPEDETEMFVVYANRTEDDILVREELEGWANKHKDRLKVWYVVEIAKEGWNYSTGFITEPVLREHVPEGLEGESLALACGPPPMIQFALQPNLEKMGYNVKEDLLIF.

Positions 53–72 (NDAVDDSYDSSDDEDESHNR) are disordered. Residues 56 to 68 (VDDSYDSSDDEDE) are compositionally biased toward acidic residues. A Mo-molybdopterin-binding site is contributed by C191. Residues 539–614 (AKMYSMSEVR…LEDYRIGELI (76 aa)) enclose the Cytochrome b5 heme-binding domain. The heme site is built by H574 and H597. One can recognise an FAD-binding FR-type domain in the interval 654-766 (REKVPVTLIE…KGPLGHIEYL (113 aa)). FAD is bound by residues 706–709 (RAYT), 723–727 (VVKVY), F728, F735, 740–742 (LMS), and T793.

This sequence belongs to the nitrate reductase family. As to quaternary structure, homodimer. Requires FAD as cofactor. Heme serves as cofactor. Mo-molybdopterin is required as a cofactor.

It carries out the reaction nitrite + NAD(+) + H2O = nitrate + NADH + H(+). In terms of biological role, nitrate reductase is a key enzyme involved in the first step of nitrate assimilation in plants, fungi and bacteria. In Brassica napus (Rape), this protein is Nitrate reductase [NADH], clone PBNBR1412 (NIA2).